The primary structure comprises 339 residues: Ketol-acid reductoisomerase (NADP(+)) (339 aa).

The 182-residue stretch at 1–182 (MRVYYDRDAD…GGGRSGVIET (182 aa)) folds into the KARI N-terminal Rossmann domain. NADP(+) contacts are provided by residues 24 to 27 (YGSQ), arginine 48, serine 51, threonine 53, and 83 to 86 (DELQ). Histidine 108 is an active-site residue. Residue glycine 134 participates in NADP(+) binding. Residues 183-328 (NFREECETDL…GRLRAMMPWI (146 aa)) form the KARI C-terminal knotted domain. Mg(2+)-binding residues include aspartate 191, glutamate 195, glutamate 227, and glutamate 231. Substrate is bound at residue serine 252.

It belongs to the ketol-acid reductoisomerase family. Mg(2+) serves as cofactor.

The catalysed reaction is (2R)-2,3-dihydroxy-3-methylbutanoate + NADP(+) = (2S)-2-acetolactate + NADPH + H(+). It catalyses the reaction (2R,3R)-2,3-dihydroxy-3-methylpentanoate + NADP(+) = (S)-2-ethyl-2-hydroxy-3-oxobutanoate + NADPH + H(+). The protein operates within amino-acid biosynthesis; L-isoleucine biosynthesis; L-isoleucine from 2-oxobutanoate: step 2/4. It functions in the pathway amino-acid biosynthesis; L-valine biosynthesis; L-valine from pyruvate: step 2/4. Functionally, involved in the biosynthesis of branched-chain amino acids (BCAA). Catalyzes an alkyl-migration followed by a ketol-acid reduction of (S)-2-acetolactate (S2AL) to yield (R)-2,3-dihydroxy-isovalerate. In the isomerase reaction, S2AL is rearranged via a Mg-dependent methyl migration to produce 3-hydroxy-3-methyl-2-ketobutyrate (HMKB). In the reductase reaction, this 2-ketoacid undergoes a metal-dependent reduction by NADPH to yield (R)-2,3-dihydroxy-isovalerate. This chain is Ketol-acid reductoisomerase (NADP(+)), found in Phenylobacterium zucineum (strain HLK1).